We begin with the raw amino-acid sequence, 47 residues long: Large ribosomal subunit protein eL40 (47 aa).

This sequence belongs to the eukaryotic ribosomal protein eL40 family.

In Halobacterium salinarum (strain ATCC 29341 / DSM 671 / R1), this protein is Large ribosomal subunit protein eL40.